The sequence spans 784 residues: Kinesin-like protein 6 (784 aa).

One can recognise a Kinesin motor domain in the interval 6–389 (SISVAVRVRP…LKYGNRAKNI (384 aa)). ATP is bound at residue 134–141 (GATGCGKT). Coiled coils occupy residues 405-440 (SEYV…EVRK) and 463-483 (RDLQ…EDEI). Residues 677–715 (SEVPTTSSVPPVEIKNKDSKPKVEKSLDKHNMNNDRSFL) are disordered. Residues 690–709 (IKNKDSKPKVEKSLDKHNMN) are compositionally biased toward basic and acidic residues.

The protein belongs to the TRAFAC class myosin-kinesin ATPase superfamily. Kinesin family. Kinesin II subfamily. Heterodimer with klp5.

It localises to the cytoplasm. It is found in the cytoskeleton. The protein resides in the chromosome. Its subcellular location is the centromere. The protein localises to the kinetochore. It localises to the spindle. Functionally, has a role in establishing metaphase during mitosis. Required for chromosome segregation where it generates tension during kinetochore capturing. The protein is Kinesin-like protein 6 (klp6) of Schizosaccharomyces pombe (strain 972 / ATCC 24843) (Fission yeast).